The chain runs to 97 residues: Serine protease inhibitor Kazal-type 14 (97 aa).

A signal peptide spans 1–21; the sequence is MAKSFPVFSLLSFILIHLVLS. The region spanning 34–97 is the Kazal-like domain; the sequence is GIIKVKCPYE…RIRFYHDGKC (64 aa). 3 disulfides stabilise this stretch: Cys40–Cys79, Cys57–Cys76, and Cys65–Cys97. Asn51 carries N-linked (GlcNAc...) asparagine glycosylation.

The protein localises to the secreted. In terms of biological role, may be a serine protease inhibitor. The chain is Serine protease inhibitor Kazal-type 14 (SPINK14) from Homo sapiens (Human).